Consider the following 154-residue polypeptide: Aspartate carbamoyltransferase regulatory chain (154 aa).

Zn(2+)-binding residues include Cys109, Cys114, Cys138, and Cys141.

This sequence belongs to the PyrI family. As to quaternary structure, contains catalytic and regulatory chains. Zn(2+) is required as a cofactor.

Functionally, involved in allosteric regulation of aspartate carbamoyltransferase. This Serratia proteamaculans (strain 568) protein is Aspartate carbamoyltransferase regulatory chain.